The primary structure comprises 229 residues: Adenylate kinase (229 aa).

10 to 15 is an ATP binding site; it reads GSGKGT. The interval 30-59 is NMP; sequence ESGVIFREHISKGTELGKQAKSYIDKGELV. Residues serine 31, arginine 36, 57–59, 84–87, and glutamine 91 contribute to the AMP site; these read ELV and GFPR. An LID region spans residues 125 to 164; it reads GRRICKTNNNHPNNVSIDSIKPDGNNCRVCHGELIVRTDD. Arginine 126 serves as a coordination point for ATP. AMP-binding residues include arginine 161 and arginine 173. ATP is bound at residue asparagine 209.

It belongs to the adenylate kinase family. In terms of assembly, monomer.

It is found in the cytoplasm. It catalyses the reaction AMP + ATP = 2 ADP. The protein operates within purine metabolism; AMP biosynthesis via salvage pathway; AMP from ADP: step 1/1. In terms of biological role, catalyzes the reversible transfer of the terminal phosphate group between ATP and AMP. Plays an important role in cellular energy homeostasis and in adenine nucleotide metabolism. This chain is Adenylate kinase, found in Lawsonia intracellularis (strain PHE/MN1-00).